Reading from the N-terminus, the 189-residue chain is Crossover junction endodeoxyribonuclease RuvC (189 aa).

Catalysis depends on residues Asp11, Glu71, and Asp143. Residues Asp11, Glu71, and Asp143 each coordinate Mg(2+).

It belongs to the RuvC family. In terms of assembly, homodimer which binds Holliday junction (HJ) DNA. The HJ becomes 2-fold symmetrical on binding to RuvC with unstacked arms; it has a different conformation from HJ DNA in complex with RuvA. In the full resolvosome a probable DNA-RuvA(4)-RuvB(12)-RuvC(2) complex forms which resolves the HJ. Mg(2+) serves as cofactor.

The protein resides in the cytoplasm. The catalysed reaction is Endonucleolytic cleavage at a junction such as a reciprocal single-stranded crossover between two homologous DNA duplexes (Holliday junction).. The RuvA-RuvB-RuvC complex processes Holliday junction (HJ) DNA during genetic recombination and DNA repair. Endonuclease that resolves HJ intermediates. Cleaves cruciform DNA by making single-stranded nicks across the HJ at symmetrical positions within the homologous arms, yielding a 5'-phosphate and a 3'-hydroxyl group; requires a central core of homology in the junction. The consensus cleavage sequence is 5'-(A/T)TT(C/G)-3'. Cleavage occurs on the 3'-side of the TT dinucleotide at the point of strand exchange. HJ branch migration catalyzed by RuvA-RuvB allows RuvC to scan DNA until it finds its consensus sequence, where it cleaves and resolves the cruciform DNA. This Methylorubrum extorquens (strain CM4 / NCIMB 13688) (Methylobacterium extorquens) protein is Crossover junction endodeoxyribonuclease RuvC.